The following is a 1172-amino-acid chain: Structural maintenance of chromosomes protein 2 (1172 aa).

32 to 39 is a binding site for ATP; the sequence is GLNGSGKS. Coiled coils occupy residues 172–204 and 258–507; these read RMFE…EEIE and SHIA…AYME. Residues 520-640 form the SMC hinge domain; sequence SKVKGLVAQL…CDTPESAKKV (121 aa). Positions 676–941 form a coiled coil; sequence LLQIQKLNSL…INHLEKENDW (266 aa).

The protein belongs to the SMC family. SMC2 subfamily. In terms of assembly, forms a heterodimer with cut3/smc4. Component of the condensin complex, which contains the cut3 and cut14 heterodimer, and three non smc subunits that probably regulate the complex: cnd1, cnd2 and cnd3.

Its subcellular location is the nucleus. The protein resides in the cytoplasm. It localises to the chromosome. Central component of the condensin complex, a complex required for conversion of interphase chromatin into mitotic-like condense chromosomes. The condensin complex probably introduces positive supercoils into relaxed DNA in the presence of type I topoisomerases and converts nicked DNA into positive knotted forms in the presence of type II topoisomerases. The chain is Structural maintenance of chromosomes protein 2 (cut14) from Schizosaccharomyces pombe (strain 972 / ATCC 24843) (Fission yeast).